A 626-amino-acid polypeptide reads, in one-letter code: FAD-binding monooxygenase moxY (626 aa).

A compositionally biased stretch (low complexity) spans 1-23 (MAPFLSAHGESASSSSSSSPTPS). A disordered region spans residues 1 to 47 (MAPFLSAHGESASSSSSSSPTPSRHTRNQHVDYSTPGSTGYNIPQNT). A compositionally biased stretch (polar residues) spans 31-47 (VDYSTPGSTGYNIPQNT). Residues 96 to 99 (TWLE), 108 to 109 (DI), and Tyr114 contribute to the FAD site. 106–108 (GCD) provides a ligand contact to NADP(+). Residues 243 to 249 (SGASSIQ) and 266 to 267 (RT) each bind NADP(+).

This sequence belongs to the FAD-binding monooxygenase family. FAD is required as a cofactor.

It participates in mycotoxin biosynthesis. Functionally, FAD-binding monooxygenase; part of the fragmented gene cluster that mediates the biosynthesis of dothistromin (DOTH), a polyketide toxin very similar in structure to the aflatoxin precursor, versicolorin B. The first step of the pathway is the conversion of acetate to norsolorinic acid (NOR) and requires the fatty acid synthase subunits hexA and hexB, as well as the polyketide synthase pksA. PksA combines a hexanoyl starter unit and 7 malonyl-CoA extender units to synthesize the precursor NOR. The hexanoyl starter unit is provided to the acyl-carrier protein (ACP) domain by the fungal fatty acid synthase hexA/hexB. The second step is the conversion of NOR to averantin (AVN) and requires the norsolorinic acid ketoreductase nor1, which catalyzes the dehydration of norsolorinic acid to form (1'S)-averantin. The cytochrome P450 monooxygenase avnA then catalyzes the hydroxylation of AVN to 5'hydroxyaverantin (HAVN). The next step is performed by adhA that transforms HAVN to averufin (AVF). Averufin might then be converted to hydroxyversicolorone by cypX and avfA. Hydroxyversicolorone is further converted versiconal hemiacetal acetate (VHA) by moxY. VHA is then the substrate for the versiconal hemiacetal acetate esterase est1 to yield versiconal (VAL). Versicolorin B synthase vbsA then converts VAL to versicolorin B (VERB) by closing the bisfuran ring. Then, the activity of the versicolorin B desaturase verB leads to versicolorin A (VERA). DotB, a predicted chloroperoxidase, may perform epoxidation of the A-ring of VERA. Alternatively, a cytochrome P450, such as cypX or avnA could catalyze this step. It is also possible that another, uncharacterized, cytochrome P450 enzyme is responsible for this step. Opening of the epoxide could potentially be achieved by the epoxide hydrolase epoA. However, epoA seems not to be required for DOTH biosynthesis, but other epoxide hydrolases may have the ability to complement this hydrolysis. Alternatively, opening of the epoxide ring could be achieved non-enzymatically. The next step is the deoxygenation of ring A to yield the 5,8-dihydroxyanthraquinone which is most likely catalyzed by the NADPH dehydrogenase encoded by ver1. The last stages of DOTH biosynthesis are proposed to involve hydroxylation of the bisfuran. OrdB and norB might have oxidative roles here. An alternative possibility is that cytochrome P450 monoogenases such as avnA and cypX might perform these steps in addition to previously proposed steps. The protein is FAD-binding monooxygenase moxY of Dothistroma septosporum (Red band needle blight fungus).